A 1066-amino-acid chain; its full sequence is Glucose transport transcription regulator RGT1 (1066 aa).

Composition is skewed to polar residues over residues 1-11 and 42-57; these read MTPMSENNGSE and VESQSSQGASGGNTSA. 6 disordered regions span residues 1 to 70, 108 to 153, 214 to 285, 298 to 399, 616 to 645, and 849 to 871; these read MTPM…ACDQ, PSKG…VLLP, YASP…QQQY, GANG…EYPL, DATKSGSNDNDNTNNDNNSNNANNDNNDSR, and MEHDDSGNSASRKFTTSQAESGK. A DNA-binding region (zn(2)-C6 fungal-type) is located at residues 68-97; that stretch reads CDQCRKRKIRCDYDDDKGVCTSCRKNGESC. 4 stretches are compositionally biased toward polar residues: residues 118–131, 139–148, 260–270, and 314–327; these read VSRSISGENNNTAA, EFSSPSSRQG, GSNPPSLKNVS, and MSPSASVPYQSVPM. 2 stretches are compositionally biased toward low complexity: residues 328–350 and 622–641; these read NQSNSNGLSQQQQQPIQWPKVQP and SNDNDNTNNDNNSNNANNDN. The segment covering 855–871 has biased composition (polar residues); it reads GNSASRKFTTSQAESGK.

Belongs to the EDS1/RGT1 family.

The protein resides in the nucleus. The protein localises to the cytoplasm. Its function is as follows. Glucose-responsive transcription factor that regulates expression of several glucose transporter (HXT) genes in response to glucose. In the absence of glucose, it functions as a transcriptional repressor, whereas high concentrations of glucose cause it to function as a transcriptional activator. In cells growing on low levels of glucose, has a neutral role, neither repressing nor activating transcription. In Zygosaccharomyces rouxii (strain ATCC 2623 / CBS 732 / NBRC 1130 / NCYC 568 / NRRL Y-229), this protein is Glucose transport transcription regulator RGT1 (RGT1).